The primary structure comprises 414 residues: DNA primase small subunit PriS (414 aa).

Catalysis depends on residues D98, D100, and D312.

The protein belongs to the eukaryotic-type primase small subunit family. Heterodimer of a small subunit (PriS) and a large subunit (PriL). The cofactor is Mg(2+). Requires Mn(2+) as cofactor.

In terms of biological role, catalytic subunit of DNA primase, an RNA polymerase that catalyzes the synthesis of short RNA molecules used as primers for DNA polymerase during DNA replication. The small subunit contains the primase catalytic core and has DNA synthesis activity on its own. Binding to the large subunit stabilizes and modulates the activity, increasing the rate of DNA synthesis while decreasing the length of the DNA fragments, and conferring RNA synthesis capability. The DNA polymerase activity may enable DNA primase to also catalyze primer extension after primer synthesis. May also play a role in DNA repair. The polypeptide is DNA primase small subunit PriS (Methanosarcina barkeri (strain Fusaro / DSM 804)).